The primary structure comprises 208 residues: Probable thymidylate kinase (208 aa).

9–16 (GIDGAGKS) contacts ATP.

The protein belongs to the thymidylate kinase family.

It catalyses the reaction dTMP + ATP = dTDP + ADP. This is Probable thymidylate kinase from Thermococcus gammatolerans (strain DSM 15229 / JCM 11827 / EJ3).